The chain runs to 380 residues: Queuine tRNA-ribosyltransferase (380 aa).

The Proton acceptor role is filled by D96. Substrate is bound by residues 96–100 (DSGGF), D150, Q193, and G220. Residues 251–257 (GVGAPDS) are RNA binding. D270 serves as the catalytic Nucleophile. Residues 275–279 (TRIAR) are RNA binding; important for wobble base 34 recognition. Zn(2+) is bound by residues C308, C310, C313, and H339.

Belongs to the queuine tRNA-ribosyltransferase family. As to quaternary structure, homodimer. Within each dimer, one monomer is responsible for RNA recognition and catalysis, while the other monomer binds to the replacement base PreQ1. Zn(2+) serves as cofactor.

The catalysed reaction is 7-aminomethyl-7-carbaguanine + guanosine(34) in tRNA = 7-aminomethyl-7-carbaguanosine(34) in tRNA + guanine. It functions in the pathway tRNA modification; tRNA-queuosine biosynthesis. Functionally, catalyzes the base-exchange of a guanine (G) residue with the queuine precursor 7-aminomethyl-7-deazaguanine (PreQ1) at position 34 (anticodon wobble position) in tRNAs with GU(N) anticodons (tRNA-Asp, -Asn, -His and -Tyr). Catalysis occurs through a double-displacement mechanism. The nucleophile active site attacks the C1' of nucleotide 34 to detach the guanine base from the RNA, forming a covalent enzyme-RNA intermediate. The proton acceptor active site deprotonates the incoming PreQ1, allowing a nucleophilic attack on the C1' of the ribose to form the product. After dissociation, two additional enzymatic reactions on the tRNA convert PreQ1 to queuine (Q), resulting in the hypermodified nucleoside queuosine (7-(((4,5-cis-dihydroxy-2-cyclopenten-1-yl)amino)methyl)-7-deazaguanosine). This chain is Queuine tRNA-ribosyltransferase, found in Streptococcus sanguinis (strain SK36).